We begin with the raw amino-acid sequence, 378 residues long: MYDSLDFDALEAAGIANPRERAGLLTYLDELGFTVEEMVQAERRGRLFGLAGDVLLWSGPPIYTLATAADELGLSADDVARAWSLLGLTVAGPDVPTLSQADVDALATWVALKALVGEDGAFGLLRVLGTAMARLAEAESTMIRAGSPNIQMTHTHDELATARAYRAAAEFVPRIGALIDTVHRHHLASARTYFEGVIGDTSASVTCGIGFADLSSFTALTQALTPAQLQDLLTEFDAAVTDVVHADGGRLVKFIGDAVMWVSSSPERLVRAAVDLVDHPGARAAELQVRAGLAYGTVLALNGDYFGNPVNLAARLVAAAAPGQILAAAQLRDMLPDWPALAHGPLTLKGFDAPVMAFELHDNPRARDADTPSPAASD.

Positions 208–317 constitute a Guanylate cyclase domain; the sequence is GIGFADLSSF…NPVNLAARLV (110 aa).

This sequence belongs to the adenylyl cyclase class-4/guanylyl cyclase family.

This is an uncharacterized protein from Mycobacterium bovis (strain ATCC BAA-935 / AF2122/97).